A 207-amino-acid chain; its full sequence is Large ribosomal subunit protein uL4 (207 aa).

The interval 48-85 (THKVKNRSEVRGGGRKPWRQKGTGRARQGSIRSPQWRG) is disordered. A compositionally biased stretch (basic residues) spans 60-71 (GGRKPWRQKGTG).

This sequence belongs to the universal ribosomal protein uL4 family. As to quaternary structure, part of the 50S ribosomal subunit.

One of the primary rRNA binding proteins, this protein initially binds near the 5'-end of the 23S rRNA. It is important during the early stages of 50S assembly. It makes multiple contacts with different domains of the 23S rRNA in the assembled 50S subunit and ribosome. Its function is as follows. Forms part of the polypeptide exit tunnel. The sequence is that of Large ribosomal subunit protein uL4 from Bacillus subtilis (strain 168).